Consider the following 130-residue polypeptide: MANVQYYGTGRRKSSVARVRLVAGEGNILVNGRALENYFNYETLIRDVKQPLVLTGNENKYDVIVKVEGGGFTGQAGAIRHGISRALLKADLDLRPALKKEGFLTRDARMKERKKYGLKAARRAPQFSKR.

The protein belongs to the universal ribosomal protein uS9 family.

The protein is Small ribosomal subunit protein uS9 of Clostridioides difficile (strain 630) (Peptoclostridium difficile).